The chain runs to 581 residues: Aspartate--tRNA ligase (581 aa).

Glu170 provides a ligand contact to L-aspartate. Residues 194–197 are aspartate; the sequence is QLFK. Arg216 provides a ligand contact to L-aspartate. ATP contacts are provided by residues 216-218 and Gln225; that span reads RDE. His440 provides a ligand contact to L-aspartate. Glu469 provides a ligand contact to ATP. Arg476 provides a ligand contact to L-aspartate. ATP is bound at residue 521–524; the sequence is GFDR.

The protein belongs to the class-II aminoacyl-tRNA synthetase family. Type 1 subfamily. In terms of assembly, homodimer.

It is found in the cytoplasm. The catalysed reaction is tRNA(Asp) + L-aspartate + ATP = L-aspartyl-tRNA(Asp) + AMP + diphosphate. Catalyzes the attachment of L-aspartate to tRNA(Asp) in a two-step reaction: L-aspartate is first activated by ATP to form Asp-AMP and then transferred to the acceptor end of tRNA(Asp). This is Aspartate--tRNA ligase from Thermosipho africanus (strain TCF52B).